The following is a 431-amino-acid chain: MVSLEKNDRVMLARQLPLKSVALILAGGRGTRLKDLTNKRAKPAVHFGGKFRIIDFALSNCLNSGIRRIGVITQYQSHTLVQHIQRGWSLFSEEMNEFVDLLPAQQRMKGENWYRGTADAVTQNLDIIRRYKAEYVVILAGDHIYKQDYSRMLIDHVEKGARCTVACMPVPIKEATAFGVMAVDESDKIIDFVEKPANPPAMPGDASKALASMGIYVFDADYLYELLAADDKDDASSHDFGKDIIPKITREGMAYAHPFPLSCVQSDPQAEPYWRDVGTLEAYWKANLDLASVTPELDMYDQNWPIRTHMESLPPAKFVQDRSGSHGMTLNSLVSGGCIISGSVVVQSVLFPRVRINSFCNIDSAVLLPEVWVGRSCRLRRCVIDRACIIPEGMVIGENAEEDARRFYRSEEGIVLVTREMLRKLQVKQER.

Lysine 39 is a binding site for beta-D-fructose 1,6-bisphosphate. AMP-binding residues include arginine 40, histidine 46, and arginine 52. Tyrosine 114 provides a ligand contact to alpha-D-glucose 1-phosphate. Arginine 130 contributes to the AMP binding site. Alpha-D-glucose 1-phosphate-binding positions include glycine 179, 194-195 (EK), and serine 212. Residues glutamate 370 and arginine 386 each coordinate AMP. Residues 419-423 (REMLR) and 429-431 (QER) each bind beta-D-fructose 1,6-bisphosphate.

Belongs to the bacterial/plant glucose-1-phosphate adenylyltransferase family. In terms of assembly, homotetramer.

The catalysed reaction is alpha-D-glucose 1-phosphate + ATP + H(+) = ADP-alpha-D-glucose + diphosphate. It participates in glycan biosynthesis; glycogen biosynthesis. Allosterically activated by fructose-1,6-bisphosphate (F16BP) and inhibited by AMP. In terms of biological role, involved in the biosynthesis of ADP-glucose, a building block required for the elongation reactions to produce glycogen. Catalyzes the reaction between ATP and alpha-D-glucose 1-phosphate (G1P) to produce pyrophosphate and ADP-Glc. This chain is Glucose-1-phosphate adenylyltransferase, found in Salmonella paratyphi C (strain RKS4594).